A 220-amino-acid chain; its full sequence is 3-dehydroquinate dehydratase (220 aa).

3-dehydroquinate-binding positions include Glu-29–Arg-31 and Arg-56. The active-site Proton donor/acceptor is the His-116. Lys-142 functions as the Schiff-base intermediate with substrate in the catalytic mechanism. Residues Arg-180, Ser-200, and Gln-204 each contribute to the 3-dehydroquinate site.

This sequence belongs to the type-I 3-dehydroquinase family. In terms of assembly, homodimer.

It catalyses the reaction 3-dehydroquinate = 3-dehydroshikimate + H2O. The protein operates within metabolic intermediate biosynthesis; chorismate biosynthesis; chorismate from D-erythrose 4-phosphate and phosphoenolpyruvate: step 3/7. Functionally, involved in the third step of the chorismate pathway, which leads to the biosynthesis of aromatic amino acids. Catalyzes the cis-dehydration of 3-dehydroquinate (DHQ) and introduces the first double bond of the aromatic ring to yield 3-dehydroshikimate. The polypeptide is 3-dehydroquinate dehydratase (Methanocaldococcus jannaschii (strain ATCC 43067 / DSM 2661 / JAL-1 / JCM 10045 / NBRC 100440) (Methanococcus jannaschii)).